A 406-amino-acid polypeptide reads, in one-letter code: Arginine biosynthesis bifunctional protein ArgJ (406 aa).

Residues T152, K179, T190, E277, N401, and S406 each contribute to the substrate site. The Nucleophile role is filled by T190.

Belongs to the ArgJ family. Heterotetramer of two alpha and two beta chains.

The protein resides in the cytoplasm. It catalyses the reaction N(2)-acetyl-L-ornithine + L-glutamate = N-acetyl-L-glutamate + L-ornithine. It carries out the reaction L-glutamate + acetyl-CoA = N-acetyl-L-glutamate + CoA + H(+). It participates in amino-acid biosynthesis; L-arginine biosynthesis; L-ornithine and N-acetyl-L-glutamate from L-glutamate and N(2)-acetyl-L-ornithine (cyclic): step 1/1. It functions in the pathway amino-acid biosynthesis; L-arginine biosynthesis; N(2)-acetyl-L-ornithine from L-glutamate: step 1/4. In terms of biological role, catalyzes two activities which are involved in the cyclic version of arginine biosynthesis: the synthesis of N-acetylglutamate from glutamate and acetyl-CoA as the acetyl donor, and of ornithine by transacetylation between N(2)-acetylornithine and glutamate. The protein is Arginine biosynthesis bifunctional protein ArgJ of Neisseria gonorrhoeae.